The chain runs to 201 residues: Cold shock domain-containing protein 4 (201 aa).

S2 is modified (N-acetylserine). A CSD domain is found at 14–81 (RRKGTVKWFD…RPKAIEVSGP (68 aa)). The segment at 66 to 109 (EVDNSGRPKAIEVSGPDGAPVQGNSGGGGSSGGRGGFGGGGGRG) is disordered. A compositionally biased stretch (gly residues) spans 89–109 (NSGGGGSSGGRGGFGGGGGRG). CCHC-type zinc fingers lie at residues 136–153 (NSCFKCGEPGHMARECSQ) and 180–197 (LSCYSCGESGHFARDCTS).

The protein belongs to the cold shock protein (CSP) family. As to expression, mostly expressed in shoot apices and siliques, and, to a lower extent, in roots, cotyledons, stems, shoots, leaves, floral buds and flowers. Present in shoot apical meristems and siliques (at protein level). Very low levels are observed in cv. Landsberg erecta compared to cv. Columbia.

Its subcellular location is the cytoplasm. The protein localises to the nucleus. The protein resides in the nucleolus. Its function is as follows. Chaperone that binds to and unwinds RNA and both single-stranded DNA and double-stranded DNA (ssDNA and dsDNA DNA). Regulates the flowering transition and flower and seed development, particularly at late stages of embryo development, through regulation of gene expression (including MEA, FIS2, AP1, CAL, AG and SHP2). This chain is Cold shock domain-containing protein 4 (CSP4), found in Arabidopsis thaliana (Mouse-ear cress).